Reading from the N-terminus, the 206-residue chain is Small ribosomal subunit protein uS4 (206 aa).

One can recognise an S4 RNA-binding domain in the interval 96–156 (SRLDNVVYRM…NKSKNQSRIK (61 aa)).

This sequence belongs to the universal ribosomal protein uS4 family. Part of the 30S ribosomal subunit. Contacts protein S5. The interaction surface between S4 and S5 is involved in control of translational fidelity.

Functionally, one of the primary rRNA binding proteins, it binds directly to 16S rRNA where it nucleates assembly of the body of the 30S subunit. Its function is as follows. With S5 and S12 plays an important role in translational accuracy. The sequence is that of Small ribosomal subunit protein uS4 from Buchnera aphidicola subsp. Acyrthosiphon pisum (strain 5A).